Here is a 254-residue protein sequence, read N- to C-terminus: MVNQKIQLICETESAVQFTALCQQKGLIHDPDSYLALVQTKVEGQVRLELRKLDEPKLGAVYVDFVTGTMAHRRKYGGGRGEAVAKAVGIKGNYLPTVIDATAGLGRDAFVLAALGCKVRLVERHPIVHLLLQDGLKRAYADVEIGTMMQANMQLLDIAHIQELNSSEEGADVVYLDPMYPHKQKSALVKKEMRIFQHLIGADLDADMLLEPALLLAQKRAVVKRPDYADFLAKKTPHFSHQTKNHRFDIYLKT.

Residues 107–108 (RD), 123–124 (ER), and Asp177 contribute to the S-adenosyl-L-methionine site.

It belongs to the methyltransferase superfamily. RsmJ family.

The protein localises to the cytoplasm. The catalysed reaction is guanosine(1516) in 16S rRNA + S-adenosyl-L-methionine = N(2)-methylguanosine(1516) in 16S rRNA + S-adenosyl-L-homocysteine + H(+). Functionally, specifically methylates the guanosine in position 1516 of 16S rRNA. The polypeptide is Ribosomal RNA small subunit methyltransferase J (Histophilus somni (strain 129Pt) (Haemophilus somnus)).